Consider the following 299-residue polypeptide: Quinolinate synthase (299 aa).

Iminosuccinate-binding residues include H21 and S38. C83 provides a ligand contact to [4Fe-4S] cluster. Residues 109–111 and S126 contribute to the iminosuccinate site; that span reads YVN. A [4Fe-4S] cluster-binding site is contributed by C170. Iminosuccinate is bound by residues 196–198 and T213; that span reads HPE. C256 contributes to the [4Fe-4S] cluster binding site.

Belongs to the quinolinate synthase family. Type 2 subfamily. [4Fe-4S] cluster is required as a cofactor.

Its subcellular location is the cytoplasm. It carries out the reaction iminosuccinate + dihydroxyacetone phosphate = quinolinate + phosphate + 2 H2O + H(+). It functions in the pathway cofactor biosynthesis; NAD(+) biosynthesis; quinolinate from iminoaspartate: step 1/1. In terms of biological role, catalyzes the condensation of iminoaspartate with dihydroxyacetone phosphate to form quinolinate. In Pyrococcus abyssi (strain GE5 / Orsay), this protein is Quinolinate synthase.